The primary structure comprises 256 residues: POU domain class 2-associating factor 1 (256 aa).

Positions 1–23 (MLWQKPTAPEQAPAPARPYQGVR) are disordered. The OCA domain maps to 16 to 38 (ARPYQGVRVKEPVKELLRRKRGH).

It belongs to the POU2AF family. Interacts with POU2F1/OCT1 and POU2F2/OCT2; the interaction increases POU2F1 and POU2F2 transactivation activity. Post-translationally, ubiquitinated; mediated by SIAH1 or SIAH2 and leading to its subsequent proteasomal degradation. In terms of tissue distribution, B-cell specific. Detected in mainly in spleen, but also in thymus, periphral blood leukocyte and small intestine.

The protein localises to the nucleus. In terms of biological role, transcriptional coactivator that specifically associates with either POU2F1/OCT1 or POU2F2/OCT2. It boosts the POU2F1/OCT1 mediated promoter activity and to a lesser extent, that of POU2F2/OCT2. It recognizes the POU domains of POU2F1/OCT1 and POU2F2/OCT2. It is essential for the response of B-cells to antigens and required for the formation of germinal centers. Regulates IL6 expression in B cells as POU2F2/OCT2 coactivator. This is POU domain class 2-associating factor 1 from Homo sapiens (Human).